The sequence spans 541 residues: Kinesin light chain 1 (541 aa).

A coiled-coil region spans residues 27 to 156 (KTKQVIQGLE…HLEFMNQLKK (130 aa)). The span at 156 to 176 (KYDDDISPSEDKDSDSSKEPL) shows a compositional bias: basic and acidic residues. Positions 156–201 (KYDDDISPSEDKDSDSSKEPLDDLFPNDEDEPGQGIQHSDSSAAAA) are disordered. A Phosphoserine modification is found at Ser-162. TPR repeat units lie at residues 211–244 (LRTLHNLVIQYASQGRYEVAVPSCKQALEDLEKT), 253–286 (ATMLNILALVYRDQNKYKDAANLLNDALAIREKT), 295–328 (AATLNNLAVLYGKRGKYKEAEPLCKRALEIREKV), 337–370 (AKQLNNLALLCQNQGKYEEVEYYYQRALGIYQTK), and 380–413 (AKTKNNLASCYLKQGKFKQAETLYKEILTRAHEA). Tyr-448 is modified (phosphotyrosine). At Ser-459 the chain carries Phosphoserine. One copy of the TPR 6 repeat lies at 463–496 (TTTLKNLGALYRRQGKFEAAETLEEAAMRSRKQG). Positions 493-541 (RKQGLDNVHKQRVAEVLNDPESMEKRRSRESLNMDVVKYESGPDGGEEA) are disordered. 2 stretches are compositionally biased toward basic and acidic residues: residues 495–505 (QGLDNVHKQRV) and 514–524 (SMEKRRSRESL). Phosphoserine; by AMPK is present on residues Ser-520 and Ser-523.

This sequence belongs to the kinesin light chain family. Oligomeric complex composed of two heavy chains and two light chains. Interacts with SPAG9. Interacts with ATCAY; may link mitochondria to KLC1 and regulate mitochondria localization into neuron projections. Interacts (via TPR repeats) with TOR1A; the interaction associates TOR1A with the kinesin oligomeric complex. Interacts with BORCS5. Interacts with MAPK8IP3/JIP3 and NTRK2/TRKB; interaction with NTRK2/TRKB is mediated by MAPK8IP3/JIP3. Interacts with CLSTN1; phosphorylation at Ser-459 inhibits interaction with CLSTN1. Phosphorylation at Ser-459 by ERK inhibits interaction with CLSTN1 and localization to cytoplasmic vesicles.

The protein resides in the cell projection. The protein localises to the growth cone. It is found in the cytoplasmic vesicle. It localises to the cytoplasm. Its subcellular location is the cytoskeleton. Kinesin is a microtubule-associated force-producing protein that may play a role in organelle transport. The light chain may function in coupling of cargo to the heavy chain or in the modulation of its ATPase activity. This is Kinesin light chain 1 (Klc1) from Mus musculus (Mouse).